Consider the following 408-residue polypeptide: Neutral cholesterol ester hydrolase 1 (408 aa).

At 1-4 (MRSS) the chain is on the cytoplasmic side. Residues 5–25 (CVLLTALVALAAYYVYIPLPG) form a helical; Signal-anchor for type II membrane protein membrane-spanning segment. The Lumenal portion of the chain corresponds to 26–408 (SVSDPWKLML…SYIKWLDQNL (383 aa)). The short motif at 113–115 (HGG) is the Involved in the stabilization of the negatively charged intermediate by the formation of the oxyanion hole element. The active site involves Ser191. 2 N-linked (GlcNAc...) asparagine glycosylation sites follow: Asn270 and Asn287. Active-site residues include Asp348 and His378. N-linked (GlcNAc...) asparagine glycosylation is present at Asn389.

This sequence belongs to the 'GDXG' lipolytic enzyme family. In terms of processing, N-glycosylated.

It is found in the cell membrane. The protein localises to the microsome. It carries out the reaction a 1-O-alkyl-2-acetyl-sn-glycerol + H2O = a 1-O-alkyl-sn-glycerol + acetate + H(+). It catalyses the reaction 1-O-hexadecyl-2-acetyl-sn-glycerol + H2O = 1-O-hexadecyl-sn-glycerol + acetate + H(+). The catalysed reaction is a cholesterol ester + H2O = cholesterol + a fatty acid + H(+). The enzyme catalyses cholesteryl (9Z-octadecenoate) + H2O = cholesterol + (9Z)-octadecenoate + H(+). Hydrolyzes 2-acetyl monoalkylglycerol ether (1-O-alkyl-2-acetyl-sn-glycerol), the penultimate precursor of the pathway for de novo synthesis of platelet-activating factor. May be responsible for the hydrolysis of cholesterol esters (such as cholesteryl (9Z-octadecenoate)) in macrophages. Also involved in organ detoxification by hydrolyzing exogenous organophosphorus compounds. The chain is Neutral cholesterol ester hydrolase 1 (NCEH1) from Pongo abelii (Sumatran orangutan).